Reading from the N-terminus, the 123-residue chain is Guanine nucleotide exchange factor MSS4 (123 aa).

At M1 the chain carries N-acetylmethionine. Residues 9–123 enclose the MSS4 domain; that stretch reads ELVSAEGRNR…YVALERVSHE (115 aa). Zn(2+)-binding residues include C23, C26, C94, and C97.

It belongs to the DSS4/MSS4 family. Interacts with RAB8A.

Functionally, guanine-nucleotide-releasing protein that acts on members of the SEC4/YPT1/RAB subfamily. Stimulates GDP release from both YPT1, RAB3A and RAB10, but is less active on these proteins than on the SEC4 protein. Might play a general role in vesicular transport. This chain is Guanine nucleotide exchange factor MSS4, found in Mus musculus (Mouse).